The primary structure comprises 137 residues: ATP synthase epsilon chain, chloroplastic (137 aa).

Belongs to the ATPase epsilon chain family. As to quaternary structure, F-type ATPases have 2 components, CF(1) - the catalytic core - and CF(0) - the membrane proton channel. CF(1) has five subunits: alpha(3), beta(3), gamma(1), delta(1), epsilon(1). CF(0) has three main subunits: a, b and c.

It localises to the plastid. Its subcellular location is the chloroplast thylakoid membrane. Functionally, produces ATP from ADP in the presence of a proton gradient across the membrane. This Agrostis stolonifera (Creeping bentgrass) protein is ATP synthase epsilon chain, chloroplastic.